Consider the following 521-residue polypeptide: Small ribosomal subunit protein mL104 (rPPR9) (521 aa).

The transit peptide at 1-59 (MPPSLPSLQLRRLLLRSFISSSSVNTLQSQPRIISSKPLFSPLPPSRSSIFSTFPSRFF) directs the protein to the mitochondrion. 8 PPR repeats span residues 174–204 (GGKTLESAIDRLVRAGRPKQVTDFFEKMEND), 210–240 (DKESLTLVVKKLCEKGHASIAEKMVKNTANE), 244–278 (DENICDLLISGWCIAEKLDEATRLAGEMSRGGFEI), 279–313 (GTKAYNMMLDCVCKLCRKKDPFKLQPEVEKVLLEM), 321–355 (NTETFNVLINNLCKIRRTEEAMTLFGRMGEWGCQP), 356–390 (DAETYLVLIRSLYQAARIGEGDEMIDKMKSAGYGE), 393–427 (NKKEYYGFLKILCGIERLEHAMSVFKSMKANGCKP), and 428–462 (GIKTYDLLMGKMCANNQLTRANGLYKEAAKKGIAV). The span at 480–495 (EVDSNVKKRETLPEKT) shows a compositional bias: basic and acidic residues. The tract at residues 480-499 (EVDSNVKKRETLPEKTARKK) is disordered. A Nuclear localization signal motif is present at residues 486–503 (KKRETLPEKTARKKKRLK).

It belongs to the PPR family. P subfamily. In terms of assembly, interacts with NAP1;1 and TCP8. Able to bind mitochondrial RNA in vitro. Component of the mitochondrial ribosome small subunit. In terms of tissue distribution, expressed in root tips, lateral root primordia and leaf primordia. Highly detected in the mature pollen grains.

The protein resides in the mitochondrion matrix. It localises to the nucleus. In terms of biological role, RNA-binding protein that functions in both mitochondrion and nucleus. In mitochondrion, it is associated with polysomes and may play a role in translation. Required during embryogenesis. In nucleus, might be involved in the regulation of its own gene expression. The sequence is that of Small ribosomal subunit protein mL104 (rPPR9) (PNM1) from Arabidopsis thaliana (Mouse-ear cress).